An 82-amino-acid chain; its full sequence is Small ribosomal subunit protein bS16 (82 aa).

The protein belongs to the bacterial ribosomal protein bS16 family.

This Salmonella agona (strain SL483) protein is Small ribosomal subunit protein bS16.